The sequence spans 378 residues: Signal recognition particle receptor FtsY (378 aa).

Residues 184–191, 266–270, and 330–333 contribute to the GTP site; these read GVNGTGKT, DTAGR, and TKLD.

The protein belongs to the GTP-binding SRP family. FtsY subfamily. In terms of assembly, part of the signal recognition particle protein translocation system, which is composed of SRP and FtsY. SRP is a ribonucleoprotein composed of Ffh and a 4.5S RNA molecule.

Its subcellular location is the cell membrane. The protein localises to the cytoplasm. It catalyses the reaction GTP + H2O = GDP + phosphate + H(+). Functionally, involved in targeting and insertion of nascent membrane proteins into the cytoplasmic membrane. Acts as a receptor for the complex formed by the signal recognition particle (SRP) and the ribosome-nascent chain (RNC). Interaction with SRP-RNC leads to the transfer of the RNC complex to the Sec translocase for insertion into the membrane, the hydrolysis of GTP by both Ffh and FtsY, and the dissociation of the SRP-FtsY complex into the individual components. This Buchnera aphidicola subsp. Acyrthosiphon pisum (strain APS) (Acyrthosiphon pisum symbiotic bacterium) protein is Signal recognition particle receptor FtsY.